The chain runs to 805 residues: Hypoxia-inducible factor 1-alpha (805 aa).

A disordered region spans residues 1–26 (MEGSVVVSEKKRISSERRKEKSRDAA). Residues 8–26 (SEKKRISSERRKEKSRDAA) are compositionally biased toward basic and acidic residues. One can recognise a bHLH domain in the interval 17-70 (RRKEKSRDAARCRRSNESEVFYELSHELPLPHNVSSHLDKASIMRLDHQLPAVE). 2 PAS domains span residues 85–157 (DKQL…PAKK) and 229–300 (PHPS…TKGQ). Residues 303–346 (TGQYRMLAKKGGYVWVETQATVIYNSKNSQPQCIVCVNYVLSEV) form the PAC domain. Pro-404 and Pro-560 each carry 4-hydroxyproline. The tract at residues 628 to 669 (KESTSAPVSPYNGNRSRTSSPVRPAKAVVDKTEKSRPGTPNL) is disordered. The span at 629–648 (ESTSAPVSPYNGNRSRTSSP) shows a compositional bias: polar residues. Asn-782 carries the (3S)-3-hydroxyasparagine modification.

As to quaternary structure, efficient DNA binding requires heterodimerization of an alpha and a beta/ARNT subunit. In normoxia, is hydroxylated on Pro-404 and Pro-560. The hydroxylated prolines promote interaction with VHL, initiating rapid ubiquitination and subsequent proteasomal degradation. Under hypoxia, proline hydroxylation is impaired and ubiquitination is attenuated, resulting in stabilization. In terms of processing, in normoxia, is hydroxylated on Asn-782, thus abrogating interaction with CREBBP and EP300 and preventing transcriptional activation. Post-translationally, the iron and 2-oxoglutarate dependent 3-hydroxylation of asparagine is (S) stereospecific within HIF CTAD domains.

The protein resides in the cytoplasm. Its subcellular location is the nucleus. The protein localises to the nucleus speckle. Its activity is regulated as follows. Induced by reactive oxygen species (ROS). Functions as a master transcriptional regulator of the adaptive response to hypoxia. Under hypoxic conditions, activates the transcription of over 40 genes, including erythropoietin, glucose transporters, glycolytic enzymes, vascular endothelial growth factor, HILPDA, and other genes whose protein products increase oxygen delivery or facilitate metabolic adaptation to hypoxia. Plays an essential role in embryonic vascularization, tumor angiogenesis and pathophysiology of ischemic disease. The protein is Hypoxia-inducible factor 1-alpha (hif1a) of Xenopus laevis (African clawed frog).